The primary structure comprises 259 residues: Type III pantothenate kinase (259 aa).

6–13 (DVGNTNCT) provides a ligand contact to ATP. Residue 107 to 110 (GSDR) participates in substrate binding. Catalysis depends on D109, which acts as the Proton acceptor. D129 serves as a coordination point for K(+). Position 132 (T132) interacts with ATP. T184 lines the substrate pocket.

This sequence belongs to the type III pantothenate kinase family. As to quaternary structure, homodimer. NH4(+) is required as a cofactor. K(+) serves as cofactor.

It localises to the cytoplasm. The catalysed reaction is (R)-pantothenate + ATP = (R)-4'-phosphopantothenate + ADP + H(+). It participates in cofactor biosynthesis; coenzyme A biosynthesis; CoA from (R)-pantothenate: step 1/5. In terms of biological role, catalyzes the phosphorylation of pantothenate (Pan), the first step in CoA biosynthesis. The polypeptide is Type III pantothenate kinase (Listeria innocua serovar 6a (strain ATCC BAA-680 / CLIP 11262)).